We begin with the raw amino-acid sequence, 465 residues long: Na(+)-translocating NADH-quinone reductase subunit A (465 aa).

It belongs to the NqrA family. As to quaternary structure, composed of six subunits; NqrA, NqrB, NqrC, NqrD, NqrE and NqrF.

The enzyme catalyses a ubiquinone + n Na(+)(in) + NADH + H(+) = a ubiquinol + n Na(+)(out) + NAD(+). Functionally, NQR complex catalyzes the reduction of ubiquinone-1 to ubiquinol by two successive reactions, coupled with the transport of Na(+) ions from the cytoplasm to the periplasm. NqrA to NqrE are probably involved in the second step, the conversion of ubisemiquinone to ubiquinol. The sequence is that of Na(+)-translocating NADH-quinone reductase subunit A from Chlamydia trachomatis serovar L2 (strain ATCC VR-902B / DSM 19102 / 434/Bu).